Consider the following 89-residue polypeptide: Small ribosomal subunit protein bS20 (89 aa).

Belongs to the bacterial ribosomal protein bS20 family.

Binds directly to 16S ribosomal RNA. This chain is Small ribosomal subunit protein bS20, found in Solidesulfovibrio magneticus (strain ATCC 700980 / DSM 13731 / RS-1) (Desulfovibrio magneticus).